The following is a 324-amino-acid chain: Glutathione synthetase (324 aa).

The region spanning 125–312 (EKLFTTTHFP…ISTIILDNLE (188 aa)) is the ATP-grasp domain. 152–209 (FIKTYKDIIIKPLHGMAGLSIFRIKEHDPNTSVIIETMTKYETIPCISQNYITDIQKG) is a binding site for ATP. 2 residues coordinate Mg(2+): glutamate 283 and asparagine 285.

It belongs to the prokaryotic GSH synthase family. The cofactor is Mg(2+). Mn(2+) is required as a cofactor.

It catalyses the reaction gamma-L-glutamyl-L-cysteine + glycine + ATP = glutathione + ADP + phosphate + H(+). Its pathway is sulfur metabolism; glutathione biosynthesis; glutathione from L-cysteine and L-glutamate: step 2/2. This chain is Glutathione synthetase, found in Buchnera aphidicola subsp. Baizongia pistaciae (strain Bp).